Consider the following 255-residue polypeptide: Glutamate racemase (255 aa).

Substrate-binding positions include 7–8 (DS) and 39–40 (YG). Cysteine 70 (proton donor/acceptor) is an active-site residue. 71–72 (NT) provides a ligand contact to substrate. The active-site Proton donor/acceptor is the cysteine 181. 182-183 (TH) provides a ligand contact to substrate.

Belongs to the aspartate/glutamate racemases family.

It carries out the reaction L-glutamate = D-glutamate. It functions in the pathway cell wall biogenesis; peptidoglycan biosynthesis. In terms of biological role, provides the (R)-glutamate required for cell wall biosynthesis. The protein is Glutamate racemase of Helicobacter pylori (strain P12).